A 671-amino-acid polypeptide reads, in one-letter code: DNA ligase (671 aa).

Residues 31–35 (DAEYD), 80–81 (SL), and E110 each bind NAD(+). Residue K112 is the N6-AMP-lysine intermediate of the active site. NAD(+) is bound by residues R133, E167, K283, and K307. Residues C401, C404, C419, and C424 each coordinate Zn(2+). The BRCT domain occupies 587 to 671 (EEELVFAGKT…YLPDEGGLNE (85 aa)).

Belongs to the NAD-dependent DNA ligase family. LigA subfamily. It depends on Mg(2+) as a cofactor. The cofactor is Mn(2+).

The enzyme catalyses NAD(+) + (deoxyribonucleotide)n-3'-hydroxyl + 5'-phospho-(deoxyribonucleotide)m = (deoxyribonucleotide)n+m + AMP + beta-nicotinamide D-nucleotide.. DNA ligase that catalyzes the formation of phosphodiester linkages between 5'-phosphoryl and 3'-hydroxyl groups in double-stranded DNA using NAD as a coenzyme and as the energy source for the reaction. It is essential for DNA replication and repair of damaged DNA. This chain is DNA ligase, found in Listeria innocua serovar 6a (strain ATCC BAA-680 / CLIP 11262).